Consider the following 578-residue polypeptide: Arginine--tRNA ligase (578 aa).

A 'HIGH' region motif is present at residues 127-137 (PNLAKEMHVGH).

Belongs to the class-I aminoacyl-tRNA synthetase family. In terms of assembly, monomer.

It localises to the cytoplasm. It catalyses the reaction tRNA(Arg) + L-arginine + ATP = L-arginyl-tRNA(Arg) + AMP + diphosphate. The polypeptide is Arginine--tRNA ligase (Pseudomonas putida (strain ATCC 700007 / DSM 6899 / JCM 31910 / BCRC 17059 / LMG 24140 / F1)).